The chain runs to 227 residues: Probable septum site-determining protein MinC (227 aa).

The protein belongs to the MinC family. In terms of assembly, interacts with MinD and FtsZ.

In terms of biological role, cell division inhibitor that blocks the formation of polar Z ring septums. Rapidly oscillates between the poles of the cell to destabilize FtsZ filaments that have formed before they mature into polar Z rings. Prevents FtsZ polymerization. In Laribacter hongkongensis (strain HLHK9), this protein is Probable septum site-determining protein MinC.